Here is a 397-residue protein sequence, read N- to C-terminus: L-asparaginase-like protein CG4372 (397 aa).

An N-terminal signal peptide occupies residues 1–22 (MLAQSCCLRLLILLLLFTTIGS). 3 disulfides stabilise this stretch: Cys-90-Cys-95, Cys-189-Cys-205, and Cys-344-Cys-371.

The protein belongs to the Ntn-hydrolase family.

In Drosophila melanogaster (Fruit fly), this protein is L-asparaginase-like protein CG4372.